The chain runs to 449 residues: Phosphoglucosamine mutase (449 aa).

The Phosphoserine intermediate role is filled by Ser-104. 4 residues coordinate Mg(2+): Ser-104, Asp-243, Asp-245, and Asp-247. The residue at position 104 (Ser-104) is a Phosphoserine.

Belongs to the phosphohexose mutase family. It depends on Mg(2+) as a cofactor. Post-translationally, activated by phosphorylation.

It catalyses the reaction alpha-D-glucosamine 1-phosphate = D-glucosamine 6-phosphate. Functionally, catalyzes the conversion of glucosamine-6-phosphate to glucosamine-1-phosphate. This chain is Phosphoglucosamine mutase, found in Xanthomonas euvesicatoria pv. vesicatoria (strain 85-10) (Xanthomonas campestris pv. vesicatoria).